The sequence spans 481 residues: Cys-Gly metallodipeptidase DUG1 (481 aa).

Position 102 (H102) interacts with Zn(2+). D104 is a catalytic residue. A Zn(2+)-binding site is contributed by D137. Residue E171 is the Proton acceptor of the active site. The Zn(2+) site is built by E172, D200, and H450. S451 carries the phosphoserine modification.

Belongs to the peptidase M20A family. Homodimer. Component of the GSH degradosomal complex composed of at least DUG1, DUG2 and DUG3. It depends on Zn(2+) as a cofactor. Mn(2+) is required as a cofactor.

It is found in the cytoplasm. The protein localises to the mitochondrion. Functionally, catalytic component of the GSH degradosomal complex involved in the degradation of glutathione (GSH) and other peptides containing a gamma-glu-X bond. Also functions in a DUG2-DUG3-independent manner as a dipeptidase with high specificity for Cys-Gly and no activity toward tri- or tetrapeptides. This is Cys-Gly metallodipeptidase DUG1 (DUG1) from Saccharomyces cerevisiae (strain ATCC 204508 / S288c) (Baker's yeast).